A 276-amino-acid polypeptide reads, in one-letter code: Large ribosomal subunit protein uL2 (276 aa).

Disordered stretches follow at residues 29-55 (PEKS…RHRG) and 219-276 (HVRG…RRTR). Residues 259–276 (TRNKKKQSSKLIVRRRTR) are compositionally biased toward basic residues.

Belongs to the universal ribosomal protein uL2 family. As to quaternary structure, part of the 50S ribosomal subunit. Forms a bridge to the 30S subunit in the 70S ribosome.

One of the primary rRNA binding proteins. Required for association of the 30S and 50S subunits to form the 70S ribosome, for tRNA binding and peptide bond formation. It has been suggested to have peptidyltransferase activity; this is somewhat controversial. Makes several contacts with the 16S rRNA in the 70S ribosome. This Rippkaea orientalis (strain PCC 8801 / RF-1) (Cyanothece sp. (strain PCC 8801)) protein is Large ribosomal subunit protein uL2.